Reading from the N-terminus, the 109-residue chain is Trafficking protein particle complex subunit 2-like protein (109 aa).

The protein belongs to the TRAPP small subunits family. Sedlin subfamily. In terms of assembly, component of the multisubunit TRAPP (transport protein particle) complex, which includes at least TRAPPC2, TRAPPC2L, TRAPPC3, TRAPPC3L, TRAPPC4, TRAPPC5, TRAPPC8, TRAPPC9, TRAPPC10, TRAPPC11 and TRAPPC12. Interacts with the heterodimer TRAPPC3-TRAPPC6A.

The protein localises to the cytoplasm. Its subcellular location is the perinuclear region. It is found in the endoplasmic reticulum. The protein resides in the golgi apparatus. In terms of biological role, may play a role in vesicular transport from endoplasmic reticulum to Golgi. This is Trafficking protein particle complex subunit 2-like protein (TRAPPC2L) from Pongo abelii (Sumatran orangutan).